The following is a 365-amino-acid chain: Serine protease 40 (365 aa).

The first 34 residues, methionine 1 to threonine 34, serve as a signal peptide directing secretion. N-linked (GlcNAc...) asparagine glycosylation is present at asparagine 44. A Peptidase S1 domain is found at isoleucine 69–lysine 313. A disulfide bridge connects residues cysteine 94 and cysteine 110. Active-site charge relay system residues include histidine 109 and aspartate 159. 3 disulfide bridges follow: cysteine 193–cysteine 270, cysteine 226–cysteine 249, and cysteine 260–cysteine 288. The active-site Charge relay system is the serine 264. Residues lysine 312–glycine 343 are disordered.

This sequence belongs to the peptidase S1 family. As to expression, expressed in testis. More specifically, abundantly expressed in the haploid round spermatid.

It is found in the cytoplasmic vesicle. The protein resides in the secretory vesicle. Its subcellular location is the acrosome. The protein localises to the secreted. Its function is as follows. May play an important role in the sperm/egg interaction; released during the acrosome reaction. This Mus musculus (Mouse) protein is Serine protease 40 (Prss40).